The sequence spans 383 residues: BRISC and BRCA1-A complex member 2 (383 aa).

UEV-like regions lie at residues 30–147 and 275–364; these read DATN…TLLE and IAAF…RAKA.

The protein belongs to the BABAM2 family. Component of the ARISC complex, at least composed of UIMC1/RAP80, ABRAXAS1, BRCC3/BRCC36, BABAM2 and BABAM1/NBA1. Component of the BRCA1-A complex, at least composed of BRCA1, BARD1, UIMC1/RAP80, ABRAXAS1, BRCC3/BRCC36, BABAM2 and BABAM1/NBA1. In the BRCA1-A complex, interacts directly with ABRAXAS1, BRCC3/BRCC36 and BABAM1/NBA1. Binds polyubiquitin. Component of the BRISC complex, at least composed of ABRAXAS2, BRCC3/BRCC36, BABAM2 and BABAM1/NBA1. Identified in a complex with SHMT2 and the other subunits of the BRISC complex. Component of the BRCA1/BRCA2 containing complex (BRCC), which also contains BRCA1, BRCA2, BARD1, BRCC3/BRCC36 and RAD51. BRCC is a ubiquitin E3 ligase complex that enhances cellular survival following DNA damage. May interact with FAS and TNFRSF1A.

Its subcellular location is the cytoplasm. The protein localises to the nucleus. Functionally, component of the BRCA1-A complex, a complex that specifically recognizes 'Lys-63'-linked ubiquitinated histones H2A and H2AX at DNA lesions sites, leading to target the BRCA1-BARD1 heterodimer to sites of DNA damage at double-strand breaks (DSBs). The BRCA1-A complex also possesses deubiquitinase activity that specifically removes 'Lys-63'-linked ubiquitin on histones H2A and H2AX. In the BRCA1-A complex, it acts as an adapter that bridges the interaction between BABAM1/NBA1 and the rest of the complex, thereby being required for the complex integrity and modulating the E3 ubiquitin ligase activity of the BRCA1-BARD1 heterodimer. Component of the BRISC complex, a multiprotein complex that specifically cleaves 'Lys-63'-linked ubiquitin in various substrates. Within the BRISC complex, acts as an adapter that bridges the interaction between BABAM1/NBA1 and the rest of the complex, thereby being required for the complex integrity. The BRISC complex is required for normal mitotic spindle assembly and microtubule attachment to kinetochores via its role in deubiquitinating NUMA1. The BRISC complex plays a role in interferon signaling via its role in the deubiquitination of the interferon receptor IFNAR1; deubiquitination increases IFNAR1 activity by enhancing its stability and cell surface expression. Down-regulates the response to bacterial lipopolysaccharide (LPS) via its role in IFNAR1 deubiquitination. May play a role in homeostasis or cellular differentiation in cells of neural, epithelial and germline origins. May also act as a death receptor-associated anti-apoptotic protein, which inhibits the mitochondrial apoptotic pathway. May regulate TNF-alpha signaling through its interactions with TNFRSF1A; however these effects may be indirect. This Gallus gallus (Chicken) protein is BRISC and BRCA1-A complex member 2 (BABAM2).